The primary structure comprises 467 residues: Transcriptional modulator WTM2 (467 aa).

Positions 1–12 are enriched in low complexity; the sequence is MAKSKSSQGASG. Disordered regions lie at residues 1 to 22 and 84 to 121; these read MAKS…PSLY and TFYD…AFQD. A compositionally biased stretch (acidic residues) spans 87–100; sequence DDDDDDDNDDDDEE. WD repeat units follow at residues 244–282, 287–327, and 349–389; these read PGTN…KPLW, PKNG…LATT, and SGGD…SRND.

Functionally, transcriptional modulator with roles in meiotic regulation and silencing. The polypeptide is Transcriptional modulator WTM2 (WTM2) (Saccharomyces cerevisiae (strain ATCC 204508 / S288c) (Baker's yeast)).